Here is a 272-residue protein sequence, read N- to C-terminus: MARLGAFDMDGTLLMPDHQLGEATQMALHRLHQRGVTLAFATGRHLLEMRQMLQKIALEAFLITGNGTRIHAPSGELLFAEDLSPQVAEAVLHGYWDTSASLHVFNDSGWLTDNDDPALLDAHAWSGFRYQLTDLKRLPAHQVTKICFVADHDALCELRVKLCQTLGSQAHICFSALDCLEVLPPGCNKGAALQALSQHLGITMADCMAFGDAMNDREMLSLAGKGLIMGNAMPQLLAELPHLPVIGHCSRQAVAHYLTHWLDHPHLDYSPE.

Asp-8 functions as the Nucleophile in the catalytic mechanism. Residues Asp-8, Asp-10, and Asp-212 each contribute to the Mg(2+) site.

This sequence belongs to the HAD-like hydrolase superfamily. Cof family. Mg(2+) serves as cofactor.

It carries out the reaction 4-amino-2-methyl-5-(diphosphooxymethyl)pyrimidine + H2O = 4-amino-2-methyl-5-(phosphooxymethyl)pyrimidine + phosphate + H(+). Functionally, catalyzes the hydrolysis of 4-amino-2-methyl-5-hydroxymethylpyrimidine pyrophosphate (HMP-PP) to 4-amino-2-methyl-5-hydroxymethylpyrimidine phosphate (HMP-P). This chain is HMP-PP phosphatase, found in Cronobacter sakazakii (strain ATCC BAA-894) (Enterobacter sakazakii).